The chain runs to 220 residues: Phosphatidylserine decarboxylase proenzyme (220 aa).

The active-site Schiff-base intermediate with substrate; via pyruvic acid is serine 188. Pyruvic acid (Ser); by autocatalysis is present on serine 188.

Belongs to the phosphatidylserine decarboxylase family. PSD-A subfamily. In terms of assembly, heterodimer of a large membrane-associated beta subunit and a small pyruvoyl-containing alpha subunit. It depends on pyruvate as a cofactor. Is synthesized initially as an inactive proenzyme. Formation of the active enzyme involves a self-maturation process in which the active site pyruvoyl group is generated from an internal serine residue via an autocatalytic post-translational modification. Two non-identical subunits are generated from the proenzyme in this reaction, and the pyruvate is formed at the N-terminus of the alpha chain, which is derived from the carboxyl end of the proenzyme. The post-translation cleavage follows an unusual pathway, termed non-hydrolytic serinolysis, in which the side chain hydroxyl group of the serine supplies its oxygen atom to form the C-terminus of the beta chain, while the remainder of the serine residue undergoes an oxidative deamination to produce ammonia and the pyruvoyl prosthetic group on the alpha chain.

The protein localises to the cell membrane. The enzyme catalyses a 1,2-diacyl-sn-glycero-3-phospho-L-serine + H(+) = a 1,2-diacyl-sn-glycero-3-phosphoethanolamine + CO2. It functions in the pathway phospholipid metabolism; phosphatidylethanolamine biosynthesis; phosphatidylethanolamine from CDP-diacylglycerol: step 2/2. Its function is as follows. Catalyzes the formation of phosphatidylethanolamine (PtdEtn) from phosphatidylserine (PtdSer). The protein is Phosphatidylserine decarboxylase proenzyme of Parabacteroides distasonis (strain ATCC 8503 / DSM 20701 / CIP 104284 / JCM 5825 / NCTC 11152).